We begin with the raw amino-acid sequence, 202 residues long: CASP-like protein 2B1 (202 aa).

The Cytoplasmic segment spans residues 1-29; the sequence is MSYLGVGVSPGNVPVYHGTNSKVIDRRVR. A helical transmembrane segment spans residues 30-50; that stretch reads LAELVLRCVICCLGVLAAVLV. The Extracellular segment spans residues 51 to 72; it reads GTDTQVKEIFSIQKKARFTDMK. A helical membrane pass occupies residues 73 to 93; the sequence is ALVFLVAANGIAAAYSFVQGV. Residues 94 to 109 lie on the Cytoplasmic side of the membrane; it reads RCVVGMVKGSVLFSKP. A helical transmembrane segment spans residues 110–132; sequence LAWVIFSGDQMMAYLTMSAVAAA. The Extracellular segment spans residues 133 to 164; it reads AQSSVFAKLGQPDLQWMKICTMYGKFCNQVGE. A helical transmembrane segment spans residues 165 to 185; the sequence is GIASALLVSVSMVVLSCISAF. Residues 186–202 lie on the Cytoplasmic side of the membrane; it reads SLFRLYGGNKGKDGARW.

The protein belongs to the Casparian strip membrane proteins (CASP) family. In terms of assembly, homodimer and heterodimers.

Its subcellular location is the cell membrane. In Populus trichocarpa (Western balsam poplar), this protein is CASP-like protein 2B1.